We begin with the raw amino-acid sequence, 405 residues long: Argininosuccinate synthase (405 aa).

12–20 (AYSGGLDTS) contributes to the ATP binding site. L-citrulline-binding residues include Tyr-90 and Ser-95. Residue Gly-120 participates in ATP binding. Thr-122, Asn-126, and Asp-127 together coordinate L-aspartate. Asn-126 serves as a coordination point for L-citrulline. L-citrulline is bound by residues Arg-130, Ser-179, Ser-188, Glu-265, and Tyr-277.

It belongs to the argininosuccinate synthase family. Type 1 subfamily. As to quaternary structure, homotetramer.

It is found in the cytoplasm. It catalyses the reaction L-citrulline + L-aspartate + ATP = 2-(N(omega)-L-arginino)succinate + AMP + diphosphate + H(+). The protein operates within amino-acid biosynthesis; L-arginine biosynthesis; L-arginine from L-ornithine and carbamoyl phosphate: step 2/3. This chain is Argininosuccinate synthase, found in Clostridium perfringens (strain 13 / Type A).